A 43-amino-acid polypeptide reads, in one-letter code: Thaumatin-like protein 1 (43 aa).

The protein belongs to the thaumatin family.

This chain is Thaumatin-like protein 1, found in Glebionis coronaria (Crown daisy).